Here is a 338-residue protein sequence, read N- to C-terminus: Beta-ketoacyl-[acyl-carrier-protein] synthase III (338 aa).

Active-site residues include Cys-119 and His-261. The tract at residues 262-266 (QANQR) is ACP-binding. Asn-291 is a catalytic residue.

Belongs to the thiolase-like superfamily. FabH family. In terms of assembly, homodimer.

Its subcellular location is the cytoplasm. It catalyses the reaction malonyl-[ACP] + acetyl-CoA + H(+) = 3-oxobutanoyl-[ACP] + CO2 + CoA. Its pathway is lipid metabolism; fatty acid biosynthesis. In terms of biological role, catalyzes the condensation reaction of fatty acid synthesis by the addition to an acyl acceptor of two carbons from malonyl-ACP. Catalyzes the first condensation reaction which initiates fatty acid synthesis and may therefore play a role in governing the total rate of fatty acid production. Possesses both acetoacetyl-ACP synthase and acetyl transacylase activities. Its substrate specificity determines the biosynthesis of branched-chain and/or straight-chain of fatty acids. The polypeptide is Beta-ketoacyl-[acyl-carrier-protein] synthase III (Prochlorococcus marinus (strain SARG / CCMP1375 / SS120)).